Here is a 470-residue protein sequence, read N- to C-terminus: V-type ATP synthase beta chain (470 aa).

The protein belongs to the ATPase alpha/beta chains family.

Functionally, produces ATP from ADP in the presence of a proton gradient across the membrane. The V-type beta chain is a regulatory subunit. This Deinococcus geothermalis (strain DSM 11300 / CIP 105573 / AG-3a) protein is V-type ATP synthase beta chain.